Consider the following 427-residue polypeptide: Tyrosine--tRNA ligase (427 aa).

Y39 contributes to the L-tyrosine binding site. A 'HIGH' region motif is present at residues 44–53 (PTSDSLHIGH). 2 residues coordinate L-tyrosine: Y178 and Q182. The short motif at 238 to 242 (KFGKT) is the 'KMSKS' region element. K241 is a binding site for ATP. The S4 RNA-binding domain maps to 360 to 417 (ITLQQALVESKLVVSRAQARELISSNSITVNSKKQLKTEYIFCATDRLYNRFTLLRRG).

This sequence belongs to the class-I aminoacyl-tRNA synthetase family. TyrS type 1 subfamily. As to quaternary structure, homodimer.

The protein localises to the cytoplasm. It catalyses the reaction tRNA(Tyr) + L-tyrosine + ATP = L-tyrosyl-tRNA(Tyr) + AMP + diphosphate + H(+). Functionally, catalyzes the attachment of tyrosine to tRNA(Tyr) in a two-step reaction: tyrosine is first activated by ATP to form Tyr-AMP and then transferred to the acceptor end of tRNA(Tyr). The sequence is that of Tyrosine--tRNA ligase from Blochmanniella pennsylvanica (strain BPEN).